Consider the following 262-residue polypeptide: Indole-3-glycerol phosphate synthase (262 aa).

This sequence belongs to the TrpC family.

It carries out the reaction 1-(2-carboxyphenylamino)-1-deoxy-D-ribulose 5-phosphate + H(+) = (1S,2R)-1-C-(indol-3-yl)glycerol 3-phosphate + CO2 + H2O. It participates in amino-acid biosynthesis; L-tryptophan biosynthesis; L-tryptophan from chorismate: step 4/5. The sequence is that of Indole-3-glycerol phosphate synthase from Leptothrix cholodnii (strain ATCC 51168 / LMG 8142 / SP-6) (Leptothrix discophora (strain SP-6)).